Reading from the N-terminus, the 909-residue chain is SCY1-like protein 2 B (909 aa).

Residues 39–343 (YELLDQIGSA…ALDFTGSNFF (305 aa)) enclose the Protein kinase domain. HEAT repeat units follow at residues 311–348 (SIPS…SDAR), 350–382 (RALR…DFDS), 383–401 (RVLR…RNLV), 402–439 (LQPI…TASG), 465–502 (VLPL…VVRQ), 499–537 (VVRQ…TLDK), and 578–617 (FTAE…KIEE). 2 disordered regions span residues 624-772 (NDSG…VAST) and 804-909 (SASL…LDLL). Composition is skewed to polar residues over residues 638-648 (NGLQFQSSTQI), 678-712 (PASS…TAPT), 724-747 (RQSS…TSFA), 804-828 (SASL…QDPL), and 835-852 (KQSQ…NNQK).

The protein belongs to the protein kinase superfamily. In terms of assembly, interacts with VTI11, VTI12 and CHC1. Expressed in roots, seedlings, leaves, stems, flowers, and, at low levels, in siliques.

Its subcellular location is the golgi apparatus membrane. It is found in the golgi apparatus. It localises to the trans-Golgi network membrane. The protein localises to the prevacuolar compartment membrane. Functionally, probably inactive kinase. Component of the AP2-containing clathrin coat that regulates clathrin-dependent trafficking at plasma membrane, TGN and endosomal system. Together with SCYL2B, required for cell growth, plant growth and development. Essential for polarized root hair development probably by mediating the root hair tip localization of cellulose synthase-like D3 (CSLD3). The protein is SCY1-like protein 2 B of Arabidopsis thaliana (Mouse-ear cress).